The primary structure comprises 394 residues: MAQLETRTEPMVVNFGPHHPSMHGVLRLVVTLDGEDVVDCEPVIGYLHRGMEKIAENRTNVMFVPYVSRMDYAAGMFYEAIVVNAPERLANIKVPKRASYIRAIMLELNRIANHLLWLGPFLADVGAQTPFFYIFREREMIYDLWEAATGQRLINNNYFRIGGVACDLPWGWLEKCKDFCDWFGPKIDEYEKLITNNPIFRRRIEGLGVIGKEQAINWSLSGPMLRAAGVPWDLRKVDHYECYDDFEWDIAWEKEGDCYARYRVRIEEMRQSLKILRQACEMIPGGPTENLEAQRTVEGKKGDLSGFDYQYVAKKVAPTFKIPNGELYTRLESGKGEIGVFIQGNNDVTPWRFKIRAADSNNLQILPHILKGAKVADIMAILGSIDVIMGSVDR.

Belongs to the complex I 49 kDa subunit family. As to quaternary structure, NDH-1 can be composed of about 15 different subunits; different subcomplexes with different compositions have been identified which probably have different functions.

Its subcellular location is the cellular thylakoid membrane. The enzyme catalyses a plastoquinone + NADH + (n+1) H(+)(in) = a plastoquinol + NAD(+) + n H(+)(out). It carries out the reaction a plastoquinone + NADPH + (n+1) H(+)(in) = a plastoquinol + NADP(+) + n H(+)(out). Its function is as follows. NDH-1 shuttles electrons from an unknown electron donor, via FMN and iron-sulfur (Fe-S) centers, to quinones in the respiratory and/or the photosynthetic chain. The immediate electron acceptor for the enzyme in this species is believed to be plastoquinone. Couples the redox reaction to proton translocation, and thus conserves the redox energy in a proton gradient. Cyanobacterial NDH-1 also plays a role in inorganic carbon-concentration. This is NAD(P)H-quinone oxidoreductase subunit H from Prochlorococcus marinus (strain NATL1A).